A 326-amino-acid polypeptide reads, in one-letter code: Pyruvate dehydrogenase E1 component subunit beta (326 aa).

E60 serves as a coordination point for thiamine diphosphate. Residues I113, A161, I162, and N166 each coordinate K(+).

Heterodimer of an alpha and a beta chain. It depends on thiamine diphosphate as a cofactor.

The protein resides in the plastid. It is found in the chloroplast. It catalyses the reaction N(6)-[(R)-lipoyl]-L-lysyl-[protein] + pyruvate + H(+) = N(6)-[(R)-S(8)-acetyldihydrolipoyl]-L-lysyl-[protein] + CO2. Functionally, the pyruvate dehydrogenase complex catalyzes the overall conversion of pyruvate to acetyl-CoA and CO(2). It contains multiple copies of three enzymatic components: pyruvate dehydrogenase (E1), dihydrolipoamide acetyltransferase (E2) and lipoamide dehydrogenase (E3). The chain is Pyruvate dehydrogenase E1 component subunit beta (pdhB) from Chaetosphaeridium globosum (Charophycean green alga).